An 892-amino-acid polypeptide reads, in one-letter code: DNA mismatch repair protein MutS (892 aa).

607 to 614 contributes to the ATP binding site; the sequence is GPNMSGKS. Residues 833-855 form a disordered region; sequence EESQLSFFGAEQSSKKQDKPALD. Residues 845-855 are compositionally biased toward basic and acidic residues; it reads SSKKQDKPALD.

It belongs to the DNA mismatch repair MutS family.

In terms of biological role, this protein is involved in the repair of mismatches in DNA. It is possible that it carries out the mismatch recognition step. This protein has a weak ATPase activity. This chain is DNA mismatch repair protein MutS, found in Bacillus anthracis (strain A0248).